We begin with the raw amino-acid sequence, 204 residues long: UPF0637 protein lmo1065 (204 aa).

This sequence belongs to the UPF0637 family.

The sequence is that of UPF0637 protein lmo1065 from Listeria monocytogenes serovar 1/2a (strain ATCC BAA-679 / EGD-e).